Consider the following 608-residue polypeptide: Actin-interacting protein 1 (608 aa).

WD repeat units follow at residues 62–101 (EHSC…HLLK), 106–149 (PIAG…GEIS), 150–190 (GQSK…FKMT), 193–232 (DHSR…LVGE), 237–276 (AHKG…LVSE), 323–362 (GHNK…NDRI), 366–403 (GHGN…YTDY), 444–483 (PIKY…LEPK), 487–526 (DHLG…PAHN), 531–570 (FHSA…KHTI), and 575–607 (HPQS…HVEN).

Belongs to the WD repeat AIP1 family. In terms of tissue distribution, expressed in pupal wing cells.

The protein localises to the cytoplasm. Its subcellular location is the cytoskeleton. Its function is as follows. Induces disassembly of actin filaments in conjunction with ADF/cofilin family proteins. Together with GMF, promotes Arp2/3-nucleated actin filament array disassembly. Essential for organismal and cell viability. Required for the development of normal wing cell planar polarity. In egg chambers and together with GMF, plays an important role in directional migration of border cell clusters. This Drosophila melanogaster (Fruit fly) protein is Actin-interacting protein 1 (flr).